The primary structure comprises 236 residues: Sensory rhodopsin II (236 aa).

7 helical membrane passes run 4–24 (ITTWFTLGLLGELLGTAVLAY), 38–58 (LLLIAIPGIAIVAYALMALGF), 73–93 (YVDWLLTTPLNVWFLALLAGA), 101–121 (LVVLQALTIVFGFAGAVTPSP), 122–142 (VSYALFAVGGALFGGVIYLLY), 167–187 (FVVVLWLVYPVVWLLGAAGVG), and 196–216 (LVVVYLDVVTKVGFGVIALLA). K206 is modified (N6-(retinylidene)lysine).

The protein belongs to the archaeal/bacterial/fungal opsin family. Post-translationally, the covalent binding of retinal to the apoprotein, bacterioopsin, generates bacteriorhodopsin.

It localises to the membrane. Functionally, mediates the photorepellent response. This chain is Sensory rhodopsin II (sop2), found in Haloarcula marismortui (strain ATCC 43049 / DSM 3752 / JCM 8966 / VKM B-1809) (Halobacterium marismortui).